A 327-amino-acid polypeptide reads, in one-letter code: Movement protein (327 aa).

Residues 297–327 (SASSSNTENELARVSQNIDLLKNKLKEICGE) adopt a coiled-coil conformation.

The protein belongs to the caulimoviridae movement protein family. As to quaternary structure, homotrimer, through the coiled-coil domain. Interacts with VAP. May interact (via N-terminus) with host prenylated Rab acceptor protein 1D (PRA1D).

Its subcellular location is the host cell junction. The protein localises to the host plasmodesma. Functionally, transports viral genome to neighboring plant cells directly through plasmosdesmata, without any budding. The movement protein allows efficient cell to cell propagation, by bypassing the host cell wall barrier. Acts by forming tubules structures that increase the size exclusion limit (SEL) of plasmodesmata, thereby allowing viral ribonucleocapsids to spread directly to neighboring cells. The polypeptide is Movement protein (Arabidopsis thaliana (Mouse-ear cress)).